A 758-amino-acid polypeptide reads, in one-letter code: Meiotic driver SPOK4 (758 aa).

Residues 4-41 (KDRITQLLRKLEEAKAREEEAKAREAQERCEKERLQLE) adopt a coiled-coil conformation. Disordered stretches follow at residues 180 to 230 (ELTQ…GVGI) and 414 to 499 (LSSA…MADP). Over residues 181–190 (LTQEDDRSSG) the composition is skewed to basic and acidic residues. The span at 416-429 (SAASSQNTENSEYT) shows a compositional bias: polar residues. Residues 457–468 (NEHDEHDEDHSE) show a composition bias toward basic and acidic residues.

Its subcellular location is the cytoplasm. The protein resides in the nucleus. In terms of biological role, promotes unequal transmission of alleles from the parental zygote to progeny spores by acting as poison/antidote system, leading to poisoning of progeny that do not inherit the allele. May possess DNA nuclease activity that leads to spore killing, and a kinase activity that confers resistance to the nuclease activity. Can suppress meiotic drive by the P.comata SPOK1 protein. The polypeptide is Meiotic driver SPOK4 (Podospora anserina (Pleurage anserina)).